A 167-amino-acid polypeptide reads, in one-letter code: Translationally-controlled tumor protein homolog (167 aa).

A TCTP domain is found at 1–167 (MIIFKDVISN…WKHGIKEEKI (167 aa)).

The protein belongs to the TCTP family.

Its subcellular location is the cytoplasm. It is found in the cytoskeleton. Functionally, involved in protein synthesis. Involved in microtubule stabilization. The polypeptide is Translationally-controlled tumor protein homolog (Yarrowia lipolytica (strain CLIB 122 / E 150) (Yeast)).